Here is a 505-residue protein sequence, read N- to C-terminus: uncharacterized protein (505 aa).

The helical transmembrane segment at 11 to 27 (IGIIGGGIVGWLAAIAL) threads the bilayer.

The protein resides in the membrane. This is an uncharacterized protein from Sinorhizobium fredii (strain NBRC 101917 / NGR234).